The chain runs to 59 residues: Conotoxin Bu1.2 (59 aa).

Residues 1–16 (MFTVFLLVVLATTVVS) form the signal peptide. The propeptide occupies 17-42 (FSTDDESDGSNEEPSADQAARSAMNR). The segment at 18 to 43 (STDDESDGSNEEPSADQAARSAMNRP) is disordered. Positions 19-31 (TDDESDGSNEEPS) are enriched in acidic residues. 2 disulfides stabilise this stretch: Cys-46-Cys-52 and Cys-47-Cys-57. A Glycine amide modification is found at Gly-58.

The protein belongs to the conotoxin A superfamily. As to expression, expressed by the venom duct.

It is found in the secreted. This Conus bullatus (Bubble cone) protein is Conotoxin Bu1.2.